We begin with the raw amino-acid sequence, 683 residues long: Protein kinase C eta type (683 aa).

A C2 domain is found at 1-118 (MSSGTMKFNG…LRTAGTSDTF (118 aa)). Phosphoserine occurs at positions 28 and 32. 2 consecutive Phorbol-ester/DAG-type zinc fingers follow at residues 171–222 (GHKF…VTAC) and 245–295 (PHKF…APNC). Position 317 is a phosphoserine (Ser317). The Protein kinase domain occupies 355-614 (FEFIRVLGKG…EHEILRHPFF (260 aa)). Residues 361–369 (LGKGSFGKV) and Lys384 contribute to the ATP site. The active-site Proton acceptor is Asp479. Thr513 bears the Phosphothreonine; by PDPK1 mark. Residues 615 to 683 (KEIDWAQLNH…FSYVSPELQL (69 aa)) enclose the AGC-kinase C-terminal domain. Thr656 carries the phosphothreonine modification. Ser675 carries the phosphoserine modification.

The protein belongs to the protein kinase superfamily. AGC Ser/Thr protein kinase family. PKC subfamily. As to quaternary structure, interacts with FYN. Interacts with RALA. Interacts with DGKQ. As to expression, predominantly expressed in lung and skin.

It localises to the cytoplasm. The enzyme catalyses L-seryl-[protein] + ATP = O-phospho-L-seryl-[protein] + ADP + H(+). The catalysed reaction is L-threonyl-[protein] + ATP = O-phospho-L-threonyl-[protein] + ADP + H(+). With respect to regulation, novel PKCs (PRKCD, PRKCE, PRKCH and PRKCQ) are calcium-insensitive, but activated by diacylglycerol (DAG) and phosphatidylserine. Three specific sites; Thr-513 (activation loop of the kinase domain), Thr-656 (turn motif) and Ser-675 (hydrophobic region), need to be phosphorylated for its full activation. Calcium-independent, phospholipid- and diacylglycerol (DAG)-dependent serine/threonine-protein kinase that is involved in the regulation of cell differentiation in keratinocytes and pre-B cell receptor, mediates regulation of epithelial tight junction integrity and foam cell formation, and is required for glioblastoma proliferation and apoptosis prevention in MCF-7 cells. In keratinocytes, binds and activates the tyrosine kinase FYN, which in turn blocks epidermal growth factor receptor (EGFR) signaling and leads to keratinocyte growth arrest and differentiation. Associates with the cyclin CCNE1-CDK2-CDKN1B complex and inhibits CDK2 kinase activity, leading to RB1 dephosphorylation and thereby G1 arrest in keratinocytes. In association with RALA activates actin depolymerization, which is necessary for keratinocyte differentiation. In the pre-B cell receptor signaling, functions downstream of BLNK by up-regulating IRF4, which in turn activates L chain gene rearrangement. Regulates epithelial tight junctions (TJs) by phosphorylating occludin (OCLN) on threonine residues, which is necessary for the assembly and maintenance of TJs. In association with PLD2 and via TLR4 signaling, is involved in lipopolysaccharide (LPS)-induced RGS2 down-regulation and foam cell formation. Upon PMA stimulation, mediates glioblastoma cell proliferation by activating the mTOR pathway, the PI3K/AKT pathway and the ERK1-dependent phosphorylation of ELK1. Involved in the protection of glioblastoma cells from irradiation-induced apoptosis by preventing caspase-9 activation. In camptothecin-treated MCF-7 cells, regulates NF-kappa-B upstream signaling by activating IKBKB, and confers protection against DNA damage-induced apoptosis. Promotes oncogenic functions of ATF2 in the nucleus while blocking its apoptotic function at mitochondria. Phosphorylates ATF2 which promotes its nuclear retention and transcriptional activity and negatively regulates its mitochondrial localization. The chain is Protein kinase C eta type (Prkch) from Mus musculus (Mouse).